The chain runs to 670 residues: Leiomodin-3 (670 aa).

Disordered regions lie at residues 34-72 (EMDDIAPDERVPVGLRQKDASHEMTVRDCTEPESEEEID), 94-120 (EIAPDERVPVGMRQRDQTDKPPTGSFD), 139-165 (EEERVPTTLLPSQKTNEEHEAKNEDKV), and 202-274 (EDKV…NWVP). 5 stretches are compositionally biased toward basic and acidic residues: residues 40–63 (PDERVPVGLRQKDASHEMTVRDCT), 97–112 (PDERVPVGMRQRDQTD), 153–163 (TNEEHEAKNED), 205–214 (VCDKPVKTDL), and 249–261 (TETKVNEEKKEDS). A coiled-coil region spans residues 150–183 (SQKTNEEHEAKNEDKVEELELVYEEIVEEVEGGQ). The stretch at 464–494 (DRQRQQRMEEQKLQQMKEQRKVMEMYEDSLN) forms a coiled coil. The segment at 517–556 (NGAEDIPEDSPEPSPQPSPPHQLCKTQHLAPQQHPPNLST) is disordered. The region spanning 637–656 (PRDHLLSEIRQSNVAYLKAV) is the WH2 domain.

The protein belongs to the tropomodulin family. In terms of tissue distribution, expressed in muscle (at protein level).

It is found in the cytoplasm. The protein localises to the myofibril. Its subcellular location is the sarcomere. The protein resides in the a band. It localises to the m line. It is found in the cytoskeleton. Essential for the organization of sarcomeric thin filaments in skeletal muscle. This is Leiomodin-3 from Danio rerio (Zebrafish).